The chain runs to 559 residues: Transmembrane E3 ubiquitin-protein ligase FLY2 (559 aa).

The N-terminal stretch at 1–29 (MNNLGNFGVWGFGFFSLSIWFAVLQQANG) is a signal peptide. Over 30–259 (LRPIRETARS…TSINVEVYYN (230 aa)) the chain is Lumenal. A helical membrane pass occupies residues 260–280 (KAVNYTLMVTFVSFLQVLLLI). At 281–294 (RQMEHSNTQSGAAK) the chain is on the cytoplasmic side. A helical transmembrane segment spans residues 295-315 (VSIVMIGQQAIMDSYLCLLHL). Over 316–318 (TAG) the chain is Lumenal. The chain crosses the membrane as a helical span at residues 319 to 339 (ILVESLFNAFATAAFFKFVVF). Topologically, residues 340–370 (SIFEMRYLLSIWKATRPSTSGEGWETMRREL) are cytoplasmic. Residues 371–391 (SFLYSRFYGILLGGILLMYEF) traverse the membrane as a helical segment. The Lumenal segment spans residues 392–394 (HNY). The helical transmembrane segment at 395–415 (MRPILLLMYSFWIPQIVANVV) threads the bilayer. Residues 416–423 (RDSRKPLH) lie on the Cytoplasmic side of the membrane. A helical membrane pass occupies residues 424–444 (PYYILGMTVTRLAIPLYVFGC). The Lumenal portion of the chain corresponds to 445–458 (PKNFMRVEPSKAWC). A helical transmembrane segment spans residues 459-479 (VSLCAFMGFQAGVLLLQHYFG). Over 480-559 (SRCFVPRKLL…PTCRRPLPPA (80 aa)) the chain is Cytoplasmic. An RING-type; atypical zinc finger spans residues 509–553 (CVICMTTIDLRHRINDCMVTPCEHIFHSGCLQRWMDIKMECPTCR).

Highly expressed in stems. Expressed in root xylem and seed coat.

It localises to the endomembrane system. It catalyses the reaction S-ubiquitinyl-[E2 ubiquitin-conjugating enzyme]-L-cysteine + [acceptor protein]-L-lysine = [E2 ubiquitin-conjugating enzyme]-L-cysteine + N(6)-ubiquitinyl-[acceptor protein]-L-lysine.. Its pathway is protein modification; protein ubiquitination. In terms of biological role, E3 ubiquitin-protein ligase that may be involved in xylem development. The sequence is that of Transmembrane E3 ubiquitin-protein ligase FLY2 from Arabidopsis thaliana (Mouse-ear cress).